The primary structure comprises 206 residues: IALAGLSILLFVYMGRNVEDPRAQLIFVATLMVPLVSISSYTGLVSGLTVGFLEMPAGHALAGMGAGPEGGVFTPWGRYLTWAFSTPMILIALGLLAGSNMSKLFTAVVADVGMCITGLAAALTTSSYLLRWVWYGISCAFFVVVLYILLAEWAKDAEVAGTADIFNTLKVLTVVLWLGYPIFWALGAEGLAVLDIAITSWAYSGM.

A helical transmembrane segment spans residues 1–15 (IALAGLSILLFVYMG). Topologically, residues 16 to 21 (RNVEDP) are cytoplasmic. A helical membrane pass occupies residues 22–45 (RAQLIFVATLMVPLVSISSYTGLV). The Extracellular segment spans residues 46-75 (SGLTVGFLEMPAGHALAGMGAGPEGGVFTP). Residues 76-97 (WGRYLTWAFSTPMILIALGLLA) traverse the membrane as a helical segment. The Cytoplasmic segment spans residues 98 to 100 (GSN). Residues 101 to 124 (MSKLFTAVVADVGMCITGLAAALT) form a helical membrane-spanning segment. Topologically, residues 125–127 (TSS) are extracellular. The chain crosses the membrane as a helical span at residues 128–150 (YLLRWVWYGISCAFFVVVLYILL). The Cytoplasmic segment spans residues 151 to 162 (AEWAKDAEVAGT). A helical membrane pass occupies residues 163–186 (ADIFNTLKVLTVVLWLGYPIFWAL). The Extracellular segment spans residues 187-195 (GAEGLAVLD). The chain crosses the membrane as a helical span at residues 196–206 (IAITSWAYSGM).

This sequence belongs to the archaeal/bacterial/fungal opsin family.

It is found in the cell membrane. Light-driven chloride pump. The protein is Halorhodopsin (hop) of Halobacterium halobium (strain mex).